Reading from the N-terminus, the 588-residue chain is A-type ATP synthase subunit A (588 aa).

An ATP-binding site is contributed by 237–244 (GPFGSGKT).

This sequence belongs to the ATPase alpha/beta chains family. In terms of assembly, has multiple subunits with at least A(3), B(3), C, D, E, F, H, I and proteolipid K(x).

It is found in the cell membrane. The catalysed reaction is ATP + H2O + 4 H(+)(in) = ADP + phosphate + 5 H(+)(out). Functionally, component of the A-type ATP synthase that produces ATP from ADP in the presence of a proton gradient across the membrane. The A chain is the catalytic subunit. The chain is A-type ATP synthase subunit A from Methanoregula boonei (strain DSM 21154 / JCM 14090 / 6A8).